A 335-amino-acid chain; its full sequence is Probable cytosolic iron-sulfur protein assembly protein Ciao1 (335 aa).

WD repeat units lie at residues 12-51 (GHKG…WSTK), 57-96 (GHKR…FECN), 101-140 (GHEN…EFEC), 146-185 (AHTQ…SDWD), 192-231 (SHTS…NDAG), 250-289 (QHSR…KRDE), and 301-335 (AHEQ…KVDD).

The protein belongs to the WD repeat CIA1 family.

Functionally, essential component of the cytosolic iron-sulfur (Fe/S) protein assembly machinery. Required for the maturation of extramitochondrial Fe/S proteins. This chain is Probable cytosolic iron-sulfur protein assembly protein Ciao1, found in Drosophila pseudoobscura pseudoobscura (Fruit fly).